Reading from the N-terminus, the 240-residue chain is Axial regulator YABBY 3 (240 aa).

The C4-type zinc-finger motif lies at 30–57 (CSFCDTVLAVSVPPSSLFKTVTVRCGHC). A disordered region spans residues 135–156 (DHLQEMPRPPPANRPPEKRQRV).

The protein belongs to the YABBY family. Interacts with SPL/NZZ. Interacts with SPEAR2. Binds to LUG and LUH; these complexes promote adaxial cell identity in leaves as well as embryonic shoot apical meristem (SAM) initiation and postembryonic SAM maintenance. In terms of tissue distribution, expressed in abaxial regions of lateral aerial organ primordia leading to cotyledons, leaves, flower meristems, sepals, petals, stamen and carpels, but not in roots.

The protein localises to the nucleus. In terms of biological role, involved in the abaxial cell fate determination during embryogenesis and organogenesis. Regulates the initiation of embryonic shoot apical meristem (SAM) development. Contributes to the repression of KNOX genes (STM, KNAT1/BP and KNAT2) to avoid ectopic meristems. Binds DNA without sequence specificity. The chain is Axial regulator YABBY 3 (YAB3) from Arabidopsis thaliana (Mouse-ear cress).